We begin with the raw amino-acid sequence, 163 residues long: Phosphopantetheine adenylyltransferase (163 aa).

Ser9 is a substrate binding site. Residues 9-10 (SF) and His17 contribute to the ATP site. 3 residues coordinate substrate: Lys41, Leu73, and Lys87. Residues 88-90 (GLR), Glu98, and 124-130 (YTYVSST) each bind ATP.

It belongs to the bacterial CoaD family. In terms of assembly, homohexamer. Mg(2+) is required as a cofactor.

The protein localises to the cytoplasm. It carries out the reaction (R)-4'-phosphopantetheine + ATP + H(+) = 3'-dephospho-CoA + diphosphate. Its pathway is cofactor biosynthesis; coenzyme A biosynthesis; CoA from (R)-pantothenate: step 4/5. Its function is as follows. Reversibly transfers an adenylyl group from ATP to 4'-phosphopantetheine, yielding dephospho-CoA (dPCoA) and pyrophosphate. This is Phosphopantetheine adenylyltransferase from Fusobacterium nucleatum subsp. nucleatum (strain ATCC 25586 / DSM 15643 / BCRC 10681 / CIP 101130 / JCM 8532 / KCTC 2640 / LMG 13131 / VPI 4355).